A 436-amino-acid polypeptide reads, in one-letter code: APO protein 1, chloroplastic (436 aa).

Residues 1–47 (MLLVSPACRGVYLQTIDPKPIDFSARASYALCFQIPTSIPKRECLMR) constitute a chloroplast transit peptide. 2 consecutive APO domains span residues 155–240 (ACSE…EIPE) and 329–414 (ACGY…RVPQ).

This sequence belongs to the APO family. As to expression, expressed at low level. Expressed at higher level in leaves. Expressed at lower level in roots, stems, siliques and flowers.

The protein localises to the plastid. Its subcellular location is the chloroplast. Involved in the stable assembly of several 4Fe-4S cluster-containing complexes of chloroplasts. May participate in 4Fe-4S cofactor incorporation into psaA and/or psaB during translation. This chain is APO protein 1, chloroplastic (APO1), found in Arabidopsis thaliana (Mouse-ear cress).